The following is a 185-amino-acid chain: Crossover junction endodeoxyribonuclease RuvC (185 aa).

Residues Asp7, Glu68, and Asp141 contribute to the active site. Mg(2+)-binding residues include Asp7, Glu68, and Asp141.

Belongs to the RuvC family. In terms of assembly, homodimer which binds Holliday junction (HJ) DNA. The HJ becomes 2-fold symmetrical on binding to RuvC with unstacked arms; it has a different conformation from HJ DNA in complex with RuvA. In the full resolvosome a probable DNA-RuvA(4)-RuvB(12)-RuvC(2) complex forms which resolves the HJ. It depends on Mg(2+) as a cofactor.

It localises to the cytoplasm. It carries out the reaction Endonucleolytic cleavage at a junction such as a reciprocal single-stranded crossover between two homologous DNA duplexes (Holliday junction).. Functionally, the RuvA-RuvB-RuvC complex processes Holliday junction (HJ) DNA during genetic recombination and DNA repair. Endonuclease that resolves HJ intermediates. Cleaves cruciform DNA by making single-stranded nicks across the HJ at symmetrical positions within the homologous arms, yielding a 5'-phosphate and a 3'-hydroxyl group; requires a central core of homology in the junction. The consensus cleavage sequence is 5'-(A/T)TT(C/G)-3'. Cleavage occurs on the 3'-side of the TT dinucleotide at the point of strand exchange. HJ branch migration catalyzed by RuvA-RuvB allows RuvC to scan DNA until it finds its consensus sequence, where it cleaves and resolves the cruciform DNA. This chain is Crossover junction endodeoxyribonuclease RuvC, found in Mycobacterium sp. (strain MCS).